A 686-amino-acid chain; its full sequence is Phosphomethylpyrimidine synthase (686 aa).

Substrate-binding positions include Asn-235, Met-264, Tyr-293, His-329, 349-351 (SRG), 390-393 (DGMR), and Glu-429. His-433 is a binding site for Zn(2+). Position 456 (Tyr-456) interacts with substrate. His-497 lines the Zn(2+) pocket. 3 residues coordinate [4Fe-4S] cluster: Cys-577, Cys-580, and Cys-585. A disordered region spans residues 659-686 (IDSSGINDNKNDQQDASVVRVPSLEIEG).

This sequence belongs to the ThiC family. As to quaternary structure, homodimer. Requires [4Fe-4S] cluster as cofactor.

The enzyme catalyses 5-amino-1-(5-phospho-beta-D-ribosyl)imidazole + S-adenosyl-L-methionine = 4-amino-2-methyl-5-(phosphooxymethyl)pyrimidine + CO + 5'-deoxyadenosine + formate + L-methionine + 3 H(+). The protein operates within cofactor biosynthesis; thiamine diphosphate biosynthesis. Its function is as follows. Catalyzes the synthesis of the hydroxymethylpyrimidine phosphate (HMP-P) moiety of thiamine from aminoimidazole ribotide (AIR) in a radical S-adenosyl-L-methionine (SAM)-dependent reaction. The sequence is that of Phosphomethylpyrimidine synthase from Shewanella denitrificans (strain OS217 / ATCC BAA-1090 / DSM 15013).